A 211-amino-acid polypeptide reads, in one-letter code: Protein Nef (211 aa).

G2 carries N-myristoyl glycine; by host lipidation. S6 carries the post-translational modification Phosphoserine; by host. The acidic; interacts with host PACS1 and PACS2; stabilizes the interaction of NEF/MHC-I with host AP1M1; necessary for MHC-I internalization stretch occupies residues 67–70 (EDEE). An SH3-binding; interaction with Src family tyrosine kinases region spans residues 74–83 (PVRPQVPLRP). The short motif at 77-80 (PQVP) is the PxxP; stabilizes the interaction of NEF/MHC-I with host AP1M1; necessary for MHC-I internalization element. Residues 113-129 (DILDLWVYHTQGYFPDW) form a mediates dimerization, Nef-PTE1 interaction region. Residues 153 to 185 (MDPDQVEEANEGENNSLLHPISLHGMDDPEKEV) are binding to ATP6V1H. Residues 169–170 (LL) carry the Dileucine internalization motif; necessary for CD4 internalization motif. A Diacidic; necessary for CD4 internalization motif is present at residues 179–180 (DD).

It belongs to the lentivirus primate group Nef protein family. Monomer; cytosolic form. Homodimer; membrane bound form. Interacts with Nef associated p21-activated kinase (PAK2); this interaction activates PAK2. Associates with the Nef-MHC-I-AP1 complex; this complex is required for MHC-I internalization. Interacts (via C-terminus) with host PI3-kinase. Interacts with host PACS1; this interaction seems to be weak. Interacts with host PACS2. Interacts with host LCK and MAPK3; these interactions inhibit the kinase activity of the latter. Interacts with host ATP6V1H; this interaction may play a role in CD4 endocytosis. Associates with the CD4-Nef-AP2 complex; this complex is required for CD4 internalization. Interacts with host AP2 subunit alpha and AP2 subunit sigma2. Interacts with TCR-zeta chain; this interaction up-regulates the Fas ligand (FasL) surface expression. Interacts with host HCK, LYN, and SRC; these interactions activate the Src family kinases. Interacts with MAP3K5; this interaction inhibits the Fas and TNFR-mediated death signals. Interacts with beta-COP and PTE1. Interacts with human RACK1; this increases Nef phosphorylation by PKC. Interacts with TP53; this interaction decreases the half-life of TP53, protecting the infected cell against p53-mediated apoptosis. The virion-associated Nef proteins are cleaved by the viral protease to release the soluble C-terminal core protein. Nef is probably cleaved concomitantly with viral structural proteins on maturation of virus particles. In terms of processing, myristoylated. Post-translationally, phosphorylated on serine residues, probably by host PKCdelta and theta.

It localises to the host cell membrane. The protein localises to the virion. It is found in the secreted. The protein resides in the host Golgi apparatus membrane. Its function is as follows. Factor of infectivity and pathogenicity, required for optimal virus replication. Alters numerous pathways of T-lymphocyte function and down-regulates immunity surface molecules in order to evade host defense and increase viral infectivity. Alters the functionality of other immunity cells, like dendritic cells, monocytes/macrophages and NK cells. Functionally, in infected CD4(+) T-lymphocytes, down-regulates the surface MHC-I, mature MHC-II, CD4, CD28, CCR5 and CXCR4 molecules. Mediates internalization and degradation of host CD4 through the interaction of with the cytoplasmic tail of CD4, the recruitment of AP-2 (clathrin adapter protein complex 2), internalization through clathrin coated pits, and subsequent transport to endosomes and lysosomes for degradation. Diverts host MHC-I molecules to the trans-Golgi network-associated endosomal compartments by an endocytic pathway to finally target them for degradation. MHC-I down-regulation may involve AP-1 (clathrin adapter protein complex 1) or possibly Src family kinase-ZAP70/Syk-PI3K cascade recruited by PACS2. In consequence infected cells are masked for immune recognition by cytotoxic T-lymphocytes. Decreasing the number of immune receptors also prevents reinfection by more HIV particles (superinfection). Down-regulates host SERINC3 and SERINC5 thereby excluding these proteins from the viral particles. Virion infectivity is drastically higher when SERINC3 or SERINC5 are excluded from the viral envelope, because these host antiviral proteins impair the membrane fusion event necessary for subsequent virion penetration. Bypasses host T-cell signaling by inducing a transcriptional program nearly identical to that of anti-CD3 cell activation. Interaction with TCR-zeta chain up-regulates the Fas ligand (FasL). Increasing surface FasL molecules and decreasing surface MHC-I molecules on infected CD4(+) cells send attacking cytotoxic CD8+ T-lymphocytes into apoptosis. In terms of biological role, plays a role in optimizing the host cell environment for viral replication without causing cell death by apoptosis. Protects the infected cells from apoptosis in order to keep them alive until the next virus generation is ready to strike. Inhibits the Fas and TNFR-mediated death signals by blocking MAP3K5/ASK1. Decreases the half-life of TP53, protecting the infected cell against p53-mediated apoptosis. Inhibits the apoptotic signals regulated by the Bcl-2 family proteins through the formation of a Nef/PI3-kinase/PAK2 complex that leads to activation of PAK2 and induces phosphorylation of host BAD. Its function is as follows. Extracellular Nef protein targets CD4(+) T-lymphocytes for apoptosis by interacting with CXCR4 surface receptors. The polypeptide is Protein Nef (Homo sapiens (Human)).